The sequence spans 268 residues: F-actin-capping protein subunit alpha (268 aa).

Ser2 is subject to N-acetylserine. A Phosphoserine modification is found at Ser17.

The protein belongs to the F-actin-capping protein alpha subunit family. As to quaternary structure, component of the F-actin capping complex, composed of a heterodimer of an alpha and a beta subunit. Interacts with BSP1 (via C-terminus); leading to recruitment of the F-actin capping complex to actin cortical patches and the acomyosin contractile ring.

The protein resides in the cytoplasm. It localises to the cytoskeleton. Its subcellular location is the actin patch. Its function is as follows. F-actin-capping proteins bind in a Ca(2+)-independent manner to the fast growing ends of actin filaments (barbed end) thereby blocking the exchange of subunits at these ends. Unlike other capping proteins (such as gelsolin and severin), these proteins do not sever actin filaments. This is F-actin-capping protein subunit alpha (CAP1) from Saccharomyces cerevisiae (strain ATCC 204508 / S288c) (Baker's yeast).